The following is a 794-amino-acid chain: Zinc finger protein 148 (794 aa).

Residue Lys6 forms a Glycyl lysine isopeptide (Lys-Gly) (interchain with G-Cter in SUMO2) linkage. Ser51 carries the phosphoserine modification. Residues Lys88, Lys115, and Lys132 each participate in a glycyl lysine isopeptide (Lys-Gly) (interchain with G-Cter in SUMO2) cross-link. The C2H2-type 1 zinc finger occupies 171–193 (HVCEHCNAAFRTNYHLQRHVFIH). Thr194 is modified (phosphothreonine). C2H2-type zinc fingers lie at residues 199-221 (FQCS…EKIH) and 227-249 (FRCD…KRTH). At Ser250 the chain carries Phosphoserine. A C2H2-type 4 zinc finger spans residues 255–278 (YQCEYCLQYFSRTDRVLKHKRMCH). Lys291 participates in a covalent cross-link: Glycyl lysine isopeptide (Lys-Gly) (interchain with G-Cter in SUMO2). The disordered stretch occupies residues 298–336 (EEDSGFSTSPKDNSLPKKKRQKTEKKSSGMDKESALDKS). Ser301 and Ser306 each carry phosphoserine. A Glycyl lysine isopeptide (Lys-Gly) (interchain with G-Cter in SUMO2) cross-link involves residue Lys308. Basic and acidic residues predominate over residues 321–336 (EKKSSGMDKESALDKS). Lys356 participates in a covalent cross-link: Glycyl lysine isopeptide (Lys-Gly) (interchain with G-Cter in SUMO1); alternate. A Glycyl lysine isopeptide (Lys-Gly) (interchain with G-Cter in SUMO2); alternate cross-link involves residue Lys356. Lys402 is covalently cross-linked (Glycyl lysine isopeptide (Lys-Gly) (interchain with G-Cter in SUMO2)). The residue at position 412 (Ser412) is a Phosphoserine. Residues Lys421 and Lys424 each participate in a glycyl lysine isopeptide (Lys-Gly) (interchain with G-Cter in SUMO2) cross-link. Polar residues predominate over residues 574-588 (NSSEVPEVTPSENVG). The disordered stretch occupies residues 574 to 596 (NSSEVPEVTPSENVGSSSQASSS). Lys607 is subject to N6-acetyllysine. Phosphoserine is present on residues Ser665 and Ser784.

It belongs to the krueppel C2H2-type zinc-finger protein family. As to quaternary structure, interacts with HNRNPDL. Interacts with the 5FMC complex; the interaction requires association with CHTOP. Interacts with CAVIN1. Sumoylated with SUMO2. Desumoylated by SENP3, resulting in the stimulation of transcription of its target genes.

The protein localises to the nucleus. Functionally, involved in transcriptional regulation. Represses the transcription of a number of genes including gastrin, stromelysin and enolase. Binds to the G-rich box in the enhancer region of these genes. This chain is Zinc finger protein 148 (ZNF148), found in Homo sapiens (Human).